The primary structure comprises 190 residues: MAFAGTTQKCMACDKTVYLVDKLTADNRVYHKACFRCHHCKGTLKLSNYNSFEGVLYCRPHFDQNFKRTGSLEKSFEGTPKIGKPDRPLEGERPAGTKVSNMFGGTREKCVGCDKTVYPIEKVSVNGTLYHKSCFKCTHGGCTISPSNYIAHEGKLYCKHHHIQLIKEKGNLSQLEGGGENAAKDKVVAA.

A2 carries the N-acetylalanine modification. An LIM zinc-binding 1 domain is found at 8–68; sequence QKCMACDKTV…RPHFDQNFKR (61 aa). Residues 74–98 are disordered; the sequence is KSFEGTPKIGKPDRPLEGERPAGTK. Over residues 83–95 the composition is skewed to basic and acidic residues; it reads GKPDRPLEGERPA. Residues 108-168 enclose the LIM zinc-binding 2 domain; it reads EKCVGCDKTV…KHHHIQLIKE (61 aa).

As to quaternary structure, interacts with F-actin. As to expression, expressed in roots, leaves, stems, flowers and siliques. Not detected in pollen.

It localises to the cytoplasm. It is found in the cytoskeleton. Binds to actin filaments and promotes cross-linking into thick bundles. Has an actin-stabilizing activity. The actin regulatory activities are not regulated by pH and [Ca(2+)]. The protein is LIM domain-containing protein WLIM1 of Arabidopsis thaliana (Mouse-ear cress).